We begin with the raw amino-acid sequence, 416 residues long: Multifunctional CCA protein (416 aa).

G8 and R11 together coordinate ATP. The CTP site is built by G8 and R11. The Mg(2+) site is built by D21 and D23. Residues R91, R138, and R141 each coordinate ATP. Residues R91, R138, and R141 each contribute to the CTP site. The region spanning 229 to 331 (TGLHQELVSD…YELLQRCDAF (103 aa)) is the HD domain.

This sequence belongs to the tRNA nucleotidyltransferase/poly(A) polymerase family. Bacterial CCA-adding enzyme type 1 subfamily. In terms of assembly, monomer. Can also form homodimers and oligomers. The cofactor is Mg(2+). Ni(2+) serves as cofactor.

The catalysed reaction is a tRNA precursor + 2 CTP + ATP = a tRNA with a 3' CCA end + 3 diphosphate. It catalyses the reaction a tRNA with a 3' CCA end + 2 CTP + ATP = a tRNA with a 3' CCACCA end + 3 diphosphate. Catalyzes the addition and repair of the essential 3'-terminal CCA sequence in tRNAs without using a nucleic acid template. Adds these three nucleotides in the order of C, C, and A to the tRNA nucleotide-73, using CTP and ATP as substrates and producing inorganic pyrophosphate. tRNA 3'-terminal CCA addition is required both for tRNA processing and repair. Also involved in tRNA surveillance by mediating tandem CCA addition to generate a CCACCA at the 3' terminus of unstable tRNAs. While stable tRNAs receive only 3'-terminal CCA, unstable tRNAs are marked with CCACCA and rapidly degraded. This Xylella fastidiosa (strain M23) protein is Multifunctional CCA protein.